The chain runs to 197 residues: Peptide deformylase (197 aa).

The Fe cation site is built by C106 and H148. Residue E149 is part of the active site. H152 contacts Fe cation.

The protein belongs to the polypeptide deformylase family. The cofactor is Fe(2+).

It catalyses the reaction N-terminal N-formyl-L-methionyl-[peptide] + H2O = N-terminal L-methionyl-[peptide] + formate. Its function is as follows. Removes the formyl group from the N-terminal Met of newly synthesized proteins. Requires at least a dipeptide for an efficient rate of reaction. N-terminal L-methionine is a prerequisite for activity but the enzyme has broad specificity at other positions. The chain is Peptide deformylase from Mycobacterium ulcerans (strain Agy99).